A 356-amino-acid polypeptide reads, in one-letter code: Stomatin-like protein 2, mitochondrial (356 aa).

The transit peptide at 1–28 directs the protein to the mitochondrion; sequence MLARAARGTGALLLRGSLLASGRAPRRA. At serine 17 the chain carries Phosphoserine; by PKC/PRKCZ. Phosphotyrosine is present on tyrosine 124. Residue lysine 145 is modified to N6-acetyllysine; alternate. Lysine 145 carries the N6-succinyllysine; alternate modification. The stretch at 215–252 forms a coiled coil; sequence INVAEGKKQAQILASEAEKAEQINQAAGEASAVLAKAK. N6-acetyllysine is present on lysine 233. Residues 321-356 are disordered; the sequence is KAPVPGTPDSLSSGSSRDVQGTDASLDEELDRVKMS. Threonine 327 bears the Phosphothreonine mark. Residues 329-343 show a composition bias toward polar residues; sequence DSLSSGSSRDVQGTD. Serine 330 is subject to Phosphoserine.

The protein belongs to the band 7/mec-2 family. Forms homooligomers. Interacts with MFN2; may form heterooligomers. Interacts with CACNA2D2. Interacts with PHB1 and PHB2; recruits them to cardiolipin-enriched mitochondrial membranes and stabilizes them. In terms of processing, hyperphosphorylated at Ser-17 in some patients with monoclonal gammopathy of undetermined significance (MGUS), multiple myeloma (MM) and Waldenstrom macroglobulinemia due to impaired dephosphorylation by PP2A. In terms of tissue distribution, ubiquitously expressed at low levels. Expressed in lymphoid tissues (at protein level).

The protein localises to the cell membrane. Its subcellular location is the mitochondrion. It localises to the mitochondrion inner membrane. The protein resides in the mitochondrion intermembrane space. It is found in the membrane raft. The protein localises to the cytoplasm. Its subcellular location is the cytoskeleton. Its function is as follows. Mitochondrial protein that probably regulates the biogenesis and the activity of mitochondria. Stimulates cardiolipin biosynthesis, binds cardiolipin-enriched membranes where it recruits and stabilizes some proteins including prohibitin and may therefore act in the organization of functional microdomains in mitochondrial membranes. Through regulation of the mitochondrial function may play a role into several biological processes including cell migration, cell proliferation, T-cell activation, calcium homeostasis and cellular response to stress. May play a role in calcium homeostasis through negative regulation of calcium efflux from mitochondria. Required for mitochondrial hyperfusion a pro-survival cellular response to stress which results in increased ATP production by mitochondria. May also regulate the organization of functional domains at the plasma membrane and play a role in T-cell activation through association with the T-cell receptor signaling complex and its regulation. The chain is Stomatin-like protein 2, mitochondrial (STOML2) from Homo sapiens (Human).